The following is a 428-amino-acid chain: MSNIVIVGAQWGDEGKGKIADTLAEKADLVVRYQGGNNAGHTLVVNGKKTFLHLIPSGVLHQHTKCVIGHGVVLDPVALDEEITRLQAKGIAISAENLFVSESCTIITSYHKLLDAVRESNTSEKIGTTGKGIGPAYEDKVSRKGIKFKHLFDKDLLRSRLAISLAEKETLFRDLYKVEYPTLEQEFDKLFALGQKLKQYAADTFSIIDKAIAAGKNVVYEGAQGVLLDVDYGTYPFVTSSNTSVAGVYSGATTAGHGFDHVIGITKAYTTRVGEGPFPTELFDDVGKFIQHKGGEIGVTTGRIRRCGWLDLPLLKYSAKCSNLTSIALTKVDVLSDMDTLKVCIGYKYEGKEIYCAYPGIDLYKVEPILVEMEPFSIDETVTKDNMPAALKTYLETIENHVGIPISSLAYGPSREQILFFEDYFKKG.

GTP contacts are provided by residues glycine 12–lysine 18 and glycine 40–threonine 42. Catalysis depends on aspartate 13, which acts as the Proton acceptor. Positions 13 and 40 each coordinate Mg(2+). Residues aspartate 13–lysine 16, asparagine 38–histidine 41, threonine 129, arginine 143, glutamine 224, threonine 239, and arginine 303 contribute to the IMP site. The active-site Proton donor is the histidine 41. Residue valine 299–arginine 305 participates in substrate binding. Residues arginine 305, lysine 331–aspartate 333, and alanine 410–glycine 412 each bind GTP.

The protein belongs to the adenylosuccinate synthetase family. In terms of assembly, homodimer. Mg(2+) is required as a cofactor.

It is found in the cytoplasm. It catalyses the reaction IMP + L-aspartate + GTP = N(6)-(1,2-dicarboxyethyl)-AMP + GDP + phosphate + 2 H(+). Its pathway is purine metabolism; AMP biosynthesis via de novo pathway; AMP from IMP: step 1/2. In terms of biological role, plays an important role in the de novo pathway of purine nucleotide biosynthesis. Catalyzes the first committed step in the biosynthesis of AMP from IMP. The polypeptide is Adenylosuccinate synthetase (Francisella tularensis subsp. mediasiatica (strain FSC147)).